A 247-amino-acid chain; its full sequence is Ubiquinone biosynthesis O-methyltransferase (247 aa).

Residues Arg-39, Gly-70, Asp-91, and Met-134 each coordinate S-adenosyl-L-methionine.

It belongs to the methyltransferase superfamily. UbiG/COQ3 family.

The enzyme catalyses a 3-demethylubiquinol + S-adenosyl-L-methionine = a ubiquinol + S-adenosyl-L-homocysteine + H(+). The catalysed reaction is a 3-(all-trans-polyprenyl)benzene-1,2-diol + S-adenosyl-L-methionine = a 2-methoxy-6-(all-trans-polyprenyl)phenol + S-adenosyl-L-homocysteine + H(+). Its pathway is cofactor biosynthesis; ubiquinone biosynthesis. Functionally, O-methyltransferase that catalyzes the 2 O-methylation steps in the ubiquinone biosynthetic pathway. The polypeptide is Ubiquinone biosynthesis O-methyltransferase (Cereibacter sphaeroides (strain KD131 / KCTC 12085) (Rhodobacter sphaeroides)).